Here is a 660-residue protein sequence, read N- to C-terminus: Acetyl-coenzyme A synthetase (660 aa).

CoA-binding positions include 197–200 and threonine 317; that span reads RGGK. ATP is bound by residues 397 to 399, 421 to 426, aspartate 512, and arginine 528; these read GEP and DTFWQT. A CoA-binding site is contributed by serine 536. Position 539 (arginine 539) interacts with ATP. Valine 550 and valine 555 together coordinate Mg(2+). Position 625 is an N6-acetyllysine (lysine 625).

Belongs to the ATP-dependent AMP-binding enzyme family. Requires Mg(2+) as cofactor. In terms of processing, acetylated. Deacetylation by the SIR2-homolog deacetylase activates the enzyme.

It carries out the reaction acetate + ATP + CoA = acetyl-CoA + AMP + diphosphate. Its function is as follows. Catalyzes the conversion of acetate into acetyl-CoA (AcCoA), an essential intermediate at the junction of anabolic and catabolic pathways. AcsA undergoes a two-step reaction. In the first half reaction, AcsA combines acetate with ATP to form acetyl-adenylate (AcAMP) intermediate. In the second half reaction, it can then transfer the acetyl group from AcAMP to the sulfhydryl group of CoA, forming the product AcCoA. In Cupriavidus taiwanensis (strain DSM 17343 / BCRC 17206 / CCUG 44338 / CIP 107171 / LMG 19424 / R1) (Ralstonia taiwanensis (strain LMG 19424)), this protein is Acetyl-coenzyme A synthetase.